Here is a 550-residue protein sequence, read N- to C-terminus: Sterol O-acyltransferase 1 (550 aa).

The residue at position 1 (M1) is an N-acetylmethionine. The tract at residues M1–A36 is disordered. At M1–I138 the chain is on the cytoplasmic side. S8 is subject to Phosphoserine. The span at K15–L34 shows a compositional bias: basic and acidic residues. H137 is a cholesterol binding site. Residues R139 to D160 traverse the membrane as a helical segment. The Lumenal portion of the chain corresponds to Y161 to K180. A helical transmembrane segment spans residues F181–W206. Topologically, residues A207–I218 are cytoplasmic. A helical transmembrane segment spans residues N219–L244. Topologically, residues A245–S252 are lumenal. The helical transmembrane segment at R253 to P276 threads the bilayer. Over R277 to R319 the chain is Cytoplasmic. The helical transmembrane segment at W320–I352 threads the bilayer. Over K353–S369 the chain is Lumenal. Residues I370–M395 traverse the membrane as a helical segment. The Cytoplasmic segment spans residues L396–R443. The short motif at F403–N409 is the FYXDWWN motif element. Positions 415, 418, 421, 425, 433, 445, and 456 each coordinate an acyl-CoA. Residues F444–L468 traverse the membrane as a helical segment. H460 is an active-site residue. Residues S469 to V474 are Lumenal-facing. The chain crosses the membrane as a helical span at residues L475–V490. Residues N491–K496 lie on the Cytoplasmic side of the membrane. Residues P497–C528 form a helical membrane-spanning segment. A disulfide bridge connects residues C528 and C546. Residues P529–F550 are Lumenal-facing.

Belongs to the membrane-bound acyltransferase family. Sterol o-acyltransferase subfamily. May form homo- or heterodimers. Interacts with UBIAD1. As to expression, expressed in most tissues, but most strongly in the adrenal gland. Expressed more strongly in liver Kupffer cells than in hepatocytes.

The protein resides in the endoplasmic reticulum membrane. The enzyme catalyses a sterol + a long-chain fatty acyl-CoA = a long-chain 3-hydroxysterol ester + CoA. The catalysed reaction is cholesterol + an acyl-CoA = a cholesterol ester + CoA. It carries out the reaction cholesterol + (9Z)-octadecenoyl-CoA = cholesteryl (9Z-octadecenoate) + CoA. It catalyses the reaction cholesterol + hexadecanoyl-CoA = cholesteryl hexadecanoate + CoA. The enzyme catalyses octadecanoyl-CoA + cholesterol = cholesteryl octadecanoate + CoA. The catalysed reaction is (9Z,12Z)-octadecadienoyl-CoA + cholesterol = cholesteryl (9Z,12Z)-octadecadienoate + CoA. It carries out the reaction (5Z,8Z,11Z,14Z)-eicosatetraenoyl-CoA + cholesterol = cholesteryl (5Z,8Z,11Z,14Z)-eicosatetraenoate + CoA. It catalyses the reaction (9Z)-hexadecenoyl-CoA + cholesterol = cholesteryl (9Z)-hexadecenoate + CoA. The enzyme catalyses (11Z)-octadecenoyl-CoA + cholesterol = cholesteryl (11Z)-octadecenoate + CoA. The catalysed reaction is (7Z)-octadecenoyl-CoA + cholesterol = cholesteryl (7Z)-octadecenoate + CoA. Its function is as follows. Catalyzes the formation of fatty acid-cholesterol esters, which are less soluble in membranes than cholesterol. Plays a role in lipoprotein assembly and dietary cholesterol absorption. Preferentially utilizes oleoyl-CoA ((9Z)-octadecenoyl-CoA) as a substrate: shows a higher activity towards an acyl-CoA substrate with a double bond at the delta-9 position (9Z) than towards saturated acyl-CoA or an unsaturated acyl-CoA with a double bond at the delta-7 (7Z) or delta-11 (11Z) positions. The polypeptide is Sterol O-acyltransferase 1 (SOAT1) (Macaca fascicularis (Crab-eating macaque)).